The chain runs to 539 residues: Aluminum-activated malate transporter 13 (539 aa).

6 helical membrane passes run 57–77, 80–100, 107–127, 130–150, 165–185, and 192–212; these read VGVA…FEGV, NALW…GATL, GLGT…AIHS, ILGG…ITYM, LVFL…DTVI, and LYTI…FFPI.

Belongs to the aromatic acid exporter (TC 2.A.85) family.

Its subcellular location is the membrane. Functionally, malate transporter. The polypeptide is Aluminum-activated malate transporter 13 (ALMT13) (Arabidopsis thaliana (Mouse-ear cress)).